Reading from the N-terminus, the 376-residue chain is Histidinol-phosphate aminotransferase (376 aa).

Position 230 is an N6-(pyridoxal phosphate)lysine (Lys-230).

The protein belongs to the class-II pyridoxal-phosphate-dependent aminotransferase family. Histidinol-phosphate aminotransferase subfamily. In terms of assembly, homodimer. Pyridoxal 5'-phosphate is required as a cofactor.

It carries out the reaction L-histidinol phosphate + 2-oxoglutarate = 3-(imidazol-4-yl)-2-oxopropyl phosphate + L-glutamate. It functions in the pathway amino-acid biosynthesis; L-histidine biosynthesis; L-histidine from 5-phospho-alpha-D-ribose 1-diphosphate: step 7/9. In Trichodesmium erythraeum (strain IMS101), this protein is Histidinol-phosphate aminotransferase.